The sequence spans 280 residues: Elongation factor Ts (280 aa).

An involved in Mg(2+) ion dislocation from EF-Tu region spans residues 79 to 82; the sequence is TDFV.

Belongs to the EF-Ts family.

It is found in the cytoplasm. Associates with the EF-Tu.GDP complex and induces the exchange of GDP to GTP. It remains bound to the aminoacyl-tRNA.EF-Tu.GTP complex up to the GTP hydrolysis stage on the ribosome. This chain is Elongation factor Ts, found in Vibrio cholerae serotype O1 (strain ATCC 39541 / Classical Ogawa 395 / O395).